The following is a 204-amino-acid chain: MKFSSALVLSAVAATALAESITTTITATKNGHVYTKTVTQDATFVWGGEDSYASSTSAAESSAAETSAAETSAAATTSAAATTSAAETSSAAETSSADEGSGSSITTTITATKNGHVYTKTVTQDATFVWTGEGSSNTWSPSSTSTSSEAATSSASTTATTTAETSSSATSSSTAELSSYTGAADAITAGTGLMGAALAAVMLL.

The N-terminal stretch at 1-18 is a signal peptide; that stretch reads MKFSSALVLSAVAATALA. 2 disordered regions span residues 84–104 and 133–175; these read SAAETSSAAETSSADEGSGSS and EGSS…SSTA. A compositionally biased stretch (low complexity) spans 135-175; sequence SSNTWSPSSTSTSSEAATSSASTTATTTAETSSSATSSSTA. Glycine 182 carries GPI-anchor amidated glycine lipidation. Positions 183 to 204 are cleaved as a propeptide — removed in mature form; sequence AADAITAGTGLMGAALAAVMLL.

In terms of processing, the GPI-anchor is attached to the protein in the endoplasmic reticulum and serves to target the protein to the cell surface. There, the glucosamine-inositol phospholipid moiety is cleaved off and the GPI-modified mannoprotein is covalently attached via its lipidless GPI glycan remnant to the 1,6-beta-glucan of the outer cell wall layer.

Its subcellular location is the secreted. It is found in the cell wall. It localises to the membrane. Functionally, involved in the uptake of non-siderophore and siderophore sources of iron. Has a role in the retention of iron in the cell wall and periplasmic space. This chain is Facilitator of iron transport 3 (FIT3), found in Saccharomyces cerevisiae (strain ATCC 204508 / S288c) (Baker's yeast).